Reading from the N-terminus, the 180-residue chain is MMKHFLLVVNILAVTLPFLAADIQNQEQTTCRENEERLFHQVTAPYIPVHYVMNRYPQYEPSYYLRRQAVPTLNPFMLNPYYVKPIVFKPNVQVPHWQILPNIHQPKVGRHSHPFFMAILPNKMQDKAVTPTTNTIAAVEPTPIPTTEPVVSTEVIAEASPELIISPETTTEATAASAAA.

The signal sequence occupies residues 1 to 21; sequence MMKHFLLVVNILAVTLPFLAA. O-linked (GalNAc...) threonine glycosylation is found at T132, T142, T147, and T153. At S160 the chain carries Phosphoserine; alternate. S160 carries an O-linked (GalNAc...) serine; alternate glycan.

It belongs to the kappa-casein family. As to expression, mammary gland specific. Secreted in milk.

The protein localises to the secreted. Kappa-casein stabilizes micelle formation, preventing casein precipitation in milk. The sequence is that of Kappa-casein (CSN3) from Oryctolagus cuniculus (Rabbit).